Reading from the N-terminus, the 84-residue chain is Beta-cardiotoxin CTX15 (84 aa).

The signal sequence occupies residues 1–21 (MKTLLLTLVVVTIVCLDLGYT). 4 cysteine pairs are disulfide-bonded: cysteine 24–cysteine 43, cysteine 36–cysteine 61, cysteine 65–cysteine 76, and cysteine 77–cysteine 82.

Belongs to the three-finger toxin family. Short-chain subfamily. Aminergic toxin sub-subfamily. As to expression, expressed by the venom gland.

Its subcellular location is the secreted. Acts as a beta-blocker by binding to beta-1 and beta-2 adrenergic receptors (ADRB1 and ADRB2). It dose-dependently decreases the heart rate (bradycardia), whereas conventional cardiotoxins increases it. At 100 mg/kg, intraperitoneal injection into mice provokes labored breathing, impaired locomotion, lack of response to external stimuli, and death (after 30 minutes). In Ophiophagus hannah (King cobra), this protein is Beta-cardiotoxin CTX15.